A 672-amino-acid polypeptide reads, in one-letter code: DNA polymerase eta (672 aa).

One can recognise a UmuC domain in the interval 14–254 (IAHVDMDCFY…LPIKKMKQLG (241 aa)). Mg(2+) contacts are provided by Asp-18 and Met-19. Residues Asp-18 and Met-19 each contribute to the Mn(2+) site. A 2'-deoxyribonucleoside 5'-triphosphate-binding residues include Tyr-23 and Arg-60. Mg(2+)-binding residues include Asp-120 and Glu-121. Mn(2+) is bound by residues Asp-120 and Glu-121. Glu-121 (proton acceptor) is an active-site residue. DNA-binding regions lie at residues 318 to 325 (KTFPGPRA) and 362 to 383 (TLHASAFRSKDSDSHKKFPSKS). Disordered regions lie at residues 521-617 (VSCP…TDWG) and 648-672 (QFNTGKSKGDGSTSSIAHYFPPLNR). 2 stretches are compositionally biased toward polar residues: residues 523–544 (CPSNEATDVSTQSESNKGTQTK) and 570–586 (YNATPPSKQETQEDSTV). 2 stretches are compositionally biased toward low complexity: residues 587–602 (SSASKRAKLSSSSHNS) and 651–662 (TGKSKGDGSTSS).

It belongs to the DNA polymerase type-Y family. Interacts with PCNA1 and PCNA2. The interaction with PCNA2 is required for translesion synthesis (TLS) to repair UV photoproducts. The cofactor is Mg(2+). Requires Mn(2+) as cofactor. Constitutively expressed in roots, stems, leaves, flowers and siliques.

The protein resides in the nucleus. It carries out the reaction DNA(n) + a 2'-deoxyribonucleoside 5'-triphosphate = DNA(n+1) + diphosphate. The enzyme in complex with the DNA substrate binds a third divalent metal cation. The binding of this third divalent cation, which is coordinated by water molecules and two oxygen atoms from DNA and dNTP, is essential for catalyzing the DNA synthesis. Its function is as follows. Error-free DNA polymerase specifically involved in DNA repair. Plays an important role in translesion synthesis (TLS), where the normal high fidelity DNA polymerases cannot proceed and DNA synthesis stalls. Plays an important role in the repair of UV-induced pyrimidine dimers and confers resistance to ultraviolet light. Depending on the context, it inserts the correct base, but may cause base transitions and transversions. Forms a Schiff base with 5'-deoxyribose phosphate at abasic sites, but does not have lyase activity. Targets POLI to replication foci. Exhibits cyclobutane dimer nonmutagenic bypass activity in vitro. The sequence is that of DNA polymerase eta (POLH) from Arabidopsis thaliana (Mouse-ear cress).